A 545-amino-acid chain; its full sequence is Bifunctional purine biosynthesis protein PurH (545 aa).

Positions 1–150 constitute an MGS-like domain; that stretch reads MTNTNRPIRR…KNHATVAIVT (150 aa).

It belongs to the PurH family.

It carries out the reaction (6R)-10-formyltetrahydrofolate + 5-amino-1-(5-phospho-beta-D-ribosyl)imidazole-4-carboxamide = 5-formamido-1-(5-phospho-D-ribosyl)imidazole-4-carboxamide + (6S)-5,6,7,8-tetrahydrofolate. The enzyme catalyses IMP + H2O = 5-formamido-1-(5-phospho-D-ribosyl)imidazole-4-carboxamide. It participates in purine metabolism; IMP biosynthesis via de novo pathway; 5-formamido-1-(5-phospho-D-ribosyl)imidazole-4-carboxamide from 5-amino-1-(5-phospho-D-ribosyl)imidazole-4-carboxamide (10-formyl THF route): step 1/1. The protein operates within purine metabolism; IMP biosynthesis via de novo pathway; IMP from 5-formamido-1-(5-phospho-D-ribosyl)imidazole-4-carboxamide: step 1/1. This Bifidobacterium longum (strain NCC 2705) protein is Bifunctional purine biosynthesis protein PurH.